Here is a 462-residue protein sequence, read N- to C-terminus: Cysteine--tRNA ligase (462 aa).

Position 28 (cysteine 28) interacts with Zn(2+). A 'HIGH' region motif is present at residues 30 to 40; that stretch reads VTAYDLCHIGH. Cysteine 209, histidine 234, and glutamate 238 together coordinate Zn(2+). The 'KMSKS' region motif lies at 266–270; the sequence is KMSKS. ATP is bound at residue lysine 269.

The protein belongs to the class-I aminoacyl-tRNA synthetase family. As to quaternary structure, monomer. Requires Zn(2+) as cofactor.

The protein resides in the cytoplasm. The catalysed reaction is tRNA(Cys) + L-cysteine + ATP = L-cysteinyl-tRNA(Cys) + AMP + diphosphate. The sequence is that of Cysteine--tRNA ligase from Baumannia cicadellinicola subsp. Homalodisca coagulata.